The sequence spans 177 residues: Inner membrane protein p22 (177 aa).

Over 1 to 7 (MFNIKMT) the chain is Intravirion. A helical transmembrane segment spans residues 8-28 (ISTLLIALIILVIIILVVFLY). Over 29 to 177 (YKKQQPPKKV…IALPRNHKHA (149 aa)) the chain is Virion surface.

Belongs to the asfivirus inner membrane protein p22 family.

It localises to the virion membrane. The protein resides in the host cell membrane. This is Inner membrane protein p22 from Ornithodoros (relapsing fever ticks).